Here is a 248-residue protein sequence, read N- to C-terminus: Pulmonary surfactant-associated protein A2 (248 aa).

An N-terminal signal peptide occupies residues 1 to 20 (MWLCPLALTLILMAASGAAC). In terms of domain architecture, Collagen-like spans 28 to 100 (GSPGIPGTPG…AGERGPPGLP (73 aa)). 4-hydroxyproline occurs at positions 30, 33, 36, 42, 54, 57, 63, 67, and 70. A disordered region spans residues 33–101 (PGTPGSHGLP…GERGPPGLPA (69 aa)). Over residues 42 to 51 (PGRDGRDGVK) the composition is skewed to basic and acidic residues. Residues 54–70 (PGPPGPMGPPGETPCPP) show a composition bias toward pro residues. A compositionally biased stretch (low complexity) spans 71–82 (GNNGLPGAPGVP). Positions 84–93 (ERGEKGEAGE) are enriched in basic and acidic residues. One can recognise a C-type lectin domain in the interval 132-248 (MTVGEKVFSS…LYSRLTICEF (117 aa)). 2 disulfide bridges follow: C155-C246 and C224-C238. N-linked (GlcNAc...) asparagine glycosylation occurs at N207.

It belongs to the SFTPA family. Oligomeric complex of 6 set of homotrimers. Post-translationally, N-acetylated.

The protein localises to the secreted. Its subcellular location is the extracellular space. The protein resides in the extracellular matrix. It localises to the surface film. Functionally, in presence of calcium ions, it binds to surfactant phospholipids and contributes to lower the surface tension at the air-liquid interface in the alveoli of the mammalian lung and is essential for normal respiration. This is Pulmonary surfactant-associated protein A2 (SFTPA2) from Homo sapiens (Human).